An 80-amino-acid chain; its full sequence is Acyl carrier protein (80 aa).

Residues 4–79 (DEVKGQVYDI…DAINYIVEKK (76 aa)) enclose the Carrier domain. S39 is modified (O-(pantetheine 4'-phosphoryl)serine).

This sequence belongs to the acyl carrier protein (ACP) family. 4'-phosphopantetheine is transferred from CoA to a specific serine of apo-ACP by AcpS. This modification is essential for activity because fatty acids are bound in thioester linkage to the sulfhydryl of the prosthetic group.

It localises to the cytoplasm. It functions in the pathway lipid metabolism; fatty acid biosynthesis. Carrier of the growing fatty acid chain in fatty acid biosynthesis. This chain is Acyl carrier protein, found in Chloroherpeton thalassium (strain ATCC 35110 / GB-78).